Consider the following 469-residue polypeptide: MLSRFIKRTYSTQTSSPVVGIIGSGPAAFYTAHRLLRNDPNVKIDMFESRPVPFGLVRYGVAPDHPEVKHVEHKFSEIAESTQFRFLGNVNVGTDVSLRDLTKNYDCLVLAYGAAGDKRLGIPGEDLSGVYSAREVVGWYNSDPRNQNLELDLSQVEDAVVIGHGNVSLDVARILLSNPAQLSPTDINPLFLKSLERSNLKRLHIVGRRNIFSVSFTIKELRELFALSSAVFFAPSFNYSTKWMNETDASGLDRPRKRLLKLLVSEIQKAVSEKRVAPYSKDKKCWNLEFGLTPVEILGHKGNVENVRFQITDSIRTDAESKFTTIPAQLFIRSIGYKSMPLPGMKDVGVPFDDAKGIVKNVNGFVRPGIYTSGWVKHGPIGVIATTMMDAFATADTITKDWKSKKEFLKNSKLGWDGLKKNIKTPVIHWKDWKVIRNAEIERGLRHESLSEKFRSNEDMIKLIYPGKK.

A mitochondrion-targeting transit peptide spans 1 to 38 (MLSRFIKRTYSTQTSSPVVGIIGSGPAAFYTAHRLLRN). Residues Ala27, Glu48, Leu56, and Val92 each coordinate FAD. NADP(+) is bound by residues 164–167 (HGNV), 208–209 (RR), and Glu220. Residues Trp375 and 382–384 (GVI) each bind FAD. Gly382 is a binding site for NADP(+).

This sequence belongs to the ferredoxin--NADP reductase type 1 family. It depends on FAD as a cofactor.

The protein resides in the mitochondrion inner membrane. The enzyme catalyses 2 reduced [adrenodoxin] + NADP(+) + H(+) = 2 oxidized [adrenodoxin] + NADPH. Functionally, adrenodoxin reductase transfers electrons from NADPH to adrenodoxin, which is involved in heme A biosynthesis and in iron-sulfur cluster assembly. Involved in the electron transfer to heme A synthase etp1(cd), a heme protein that catalyzes the conversion of heme O to heme A. Required for the de novo synthesis of Fe-S clusters on iron sulfur cluster assembly protein isu1. Involved in electron delivery for Fe-S cluster synthesis. Essential for coenzyme Q biosynthesis. May be involved in the electron transfer required for the hydroxylation reaction performed by coq6. May play a role in cellular and mitochondrial iron homeostasis. This is Probable NADPH:adrenodoxin oxidoreductase, mitochondrial (arh1) from Schizosaccharomyces pombe (strain 972 / ATCC 24843) (Fission yeast).